Reading from the N-terminus, the 182-residue chain is MTFEQLIPLIIMAFALGMDAFSVSLGMGMMTLKIRQILYIGVTIGIFHIIMPFIGMVLGRFLSEQYGDIAHFAGAILLIGLGFYIVYSSILENEETRTAPIGISLFVFAFGVSIDSFSVGLSLGIYGAQTIITILLFGFVSMLLAWIGLFIGRHAKDMLGTYGEIVGGIILVGFGLYLLFPI.

6 helical membrane-spanning segments follow: residues 6–26 (LIPL…VSLG), 37–57 (ILYI…IGMV), 71–91 (HFAG…SSIL), 101–121 (IGIS…SVGL), 131–151 (IITI…GLFI), and 162–182 (YGEI…LFPI).

Belongs to the MntP (TC 9.B.29) family.

It is found in the cell membrane. Probably functions as a manganese efflux pump. This Bacillus cereus (strain ATCC 10987 / NRS 248) protein is Putative manganese efflux pump MntP.